The sequence spans 266 residues: Small ribosomal subunit protein uS2 (266 aa).

Belongs to the universal ribosomal protein uS2 family.

This is Small ribosomal subunit protein uS2 from Paramagnetospirillum magneticum (strain ATCC 700264 / AMB-1) (Magnetospirillum magneticum).